The primary structure comprises 359 residues: Putative plant UBX domain-containing protein 15 (359 aa).

Positions 277 to 357 (DRSVVCSISV…GIANSIISVT (81 aa)) constitute a UBX domain.

The chain is Putative plant UBX domain-containing protein 15 from Arabidopsis thaliana (Mouse-ear cress).